The following is a 348-amino-acid chain: Autophagy-related protein 27 (348 aa).

Residues 1–20 (MYRPDLLAFLLPLLAAPVFS) form the signal peptide. Residues 21–274 (AETLDCGKIR…DDGGDNSSSH (254 aa)) are Lumenal-facing. An MRH domain is found at 24–255 (LDCGKIRADG…TWHTKYACEK (232 aa)). 3 disulfides stabilise this stretch: Cys-26-Cys-69, Cys-82-Cys-89, and Cys-175-Cys-253. N-linked (GlcNAc...) asparagine glycosylation is found at Asn-61 and Asn-84. Residues 180 to 208 (EGTEGEWVSEEKYEKRADEKKDDDKKEDG) are compositionally biased toward basic and acidic residues. The disordered stretch occupies residues 180-219 (EGTEGEWVSEEKYEKRADEKKDDDKKEDGGDKDEGESTLE). N-linked (GlcNAc...) asparagine glycans are attached at residues Asn-226 and Asn-270. Residues 275-295 (WGFFTWFVLIAFLLIAGYLIF) traverse the membrane as a helical segment. Residues 296–348 (SSWINFTRYGARGWDLLPHSDTIRDIPYLLKDFIRRILNTVQGTGSRGGYSAV) are Cytoplasmic-facing.

It belongs to the ATG27 family. As to quaternary structure, forms a complex with ATG9 and ATG23.

It localises to the cytoplasmic vesicle membrane. Its subcellular location is the golgi apparatus membrane. The protein localises to the mitochondrion membrane. The protein resides in the preautophagosomal structure membrane. In terms of biological role, effector of VPS34 phosphatidylinositol 3-phosphate kinase signaling. Regulates the cytoplasm to vacuole transport (Cvt) vesicle formation. Plays a role in ATG protein retrieval from the pre-autophagosomal structure (PAS) and is especially required for autophagy-dependent cycling of ATG9. Autophagy is required for proper vegetative growth, asexual/sexual reproduction, and full virulence. Autophagy is particularly involved in the biosynthesis of deoxynivalenol (DON), an important virulence determinant. This Gibberella zeae (strain ATCC MYA-4620 / CBS 123657 / FGSC 9075 / NRRL 31084 / PH-1) (Wheat head blight fungus) protein is Autophagy-related protein 27.